Consider the following 939-residue polypeptide: Protein translocase subunit SecA (939 aa).

ATP contacts are provided by residues glutamine 85, glycine 103–threonine 107, and aspartate 504. The interval proline 850 to lysine 939 is disordered. Residues glycine 854–glycine 864 are compositionally biased toward basic and acidic residues. Residues glutamate 924–lysine 939 show a composition bias toward basic residues.

This sequence belongs to the SecA family. In terms of assembly, monomer and homodimer. Part of the essential Sec protein translocation apparatus which comprises SecA, SecYEG and auxiliary proteins SecDF. Other proteins may also be involved.

The protein resides in the cell membrane. It localises to the cytoplasm. The catalysed reaction is ATP + H2O + cellular proteinSide 1 = ADP + phosphate + cellular proteinSide 2.. Its function is as follows. Part of the Sec protein translocase complex. Interacts with the SecYEG preprotein conducting channel. Has a central role in coupling the hydrolysis of ATP to the transfer of proteins into and across the cell membrane, serving as an ATP-driven molecular motor driving the stepwise translocation of polypeptide chains across the membrane. In Streptomyces griseus subsp. griseus (strain JCM 4626 / CBS 651.72 / NBRC 13350 / KCC S-0626 / ISP 5235), this protein is Protein translocase subunit SecA.